A 410-amino-acid chain; its full sequence is MKTEIINRFISYAQVDTQSDENSETCPSTPGQLVLAQMLVGELKAIGMQEVTMDSNGYVMATLPSNTDKEIPTIGFLAHMDTATDFTGADVKPQVIENYNGQDIVLNEALNIVLSPQEFPELAGYKGHTIITTDGTTLLGADDKAGIAEIMTAMDYLIRHPELKHGKVRVAFTPDEEIGRGPDKFDVSAFDAVYAYTMDGGPLGGIEYESFHAASATITCKGTNVHPGSAKGKMVNAAKIAMELHGKLPANETTEETEGYEGFYHLSSIQGDVEQTQLRYLIRDHDRNRFQERKSELARIVEELQKTYGEKRIELEIKDEYFNMREKIEPVMEVVDIATQALENLGIVPNIQPIRGGTDGSQLSYMGLPTPNIFTGGENYHGRFEYVSVDNMMHAVNTIIEIVKLYEQRA.

Position 79 (His79) interacts with Zn(2+). Residue Asp81 is part of the active site. Asp142 contacts Zn(2+). The active-site Proton acceptor is Glu176. Positions 177, 199, and 381 each coordinate Zn(2+).

It belongs to the peptidase M20B family. The cofactor is Zn(2+).

It localises to the cytoplasm. The enzyme catalyses Release of the N-terminal residue from a tripeptide.. Its function is as follows. Cleaves the N-terminal amino acid of tripeptides. The chain is Peptidase T from Brevibacillus brevis (strain 47 / JCM 6285 / NBRC 100599).